The following is a 627-amino-acid chain: Ras and EF-hand domain-containing protein homolog (627 aa).

Positions 55 to 245 (YERVIRNFLR…RKLHDSNDGL (191 aa)) form a coiled coil. Phosphoserine is present on residues serine 266 and serine 272. Residues 438 to 443 (AVGKSS), 541 to 544 (NKAD), and 578 to 579 (AK) contribute to the GTP site.

This sequence belongs to the small GTPase superfamily. Rab family. As to quaternary structure, homodimer. Interacts with the dynein-dynactin complex.

Its subcellular location is the cytoplasm. The protein localises to the perinuclear region. In terms of biological role, binds predominantly GDP, and also GTP. Acts as a dynein adapter protein that activates dynein-mediated transport and dynein-dynactin motility on microtubules. This is Ras and EF-hand domain-containing protein homolog (Rasef) from Mus musculus (Mouse).